We begin with the raw amino-acid sequence, 68 residues long: Large ribosomal subunit protein bL31 (68 aa).

The protein belongs to the bacterial ribosomal protein bL31 family. Type A subfamily. In terms of assembly, part of the 50S ribosomal subunit.

Binds the 23S rRNA. This Helicobacter hepaticus (strain ATCC 51449 / 3B1) protein is Large ribosomal subunit protein bL31.